The primary structure comprises 326 residues: rRNA 2'-O-methyltransferase fibrillarin (326 aa).

Positions M1–G84 are disordered. Residues S7–G83 show a composition bias toward gly residues. An asymmetric dimethylarginine mark is found at R8, R11, R15, R19, R23, R26, R32, R36, R39, R45, R49, R55, R59, R63, R67, R71, R74, and R78. Residues T180–S181, E199–F200, D224–A225, and D244–Q247 contribute to the S-adenosyl-L-methionine site.

The protein belongs to the methyltransferase superfamily. Fibrillarin family. In terms of assembly, component of box C/D small nucleolar ribonucleoprotein (snoRNP) particles that contain SNU13, NOP1, SIK1/NOP56 and NOP58, plus a guide RNA. By homology to other fibrillarins, some or all of the N-terminal domain arginines are modified to asymmetric dimethylarginine (DMA).

It is found in the nucleus. The protein resides in the nucleolus. The catalysed reaction is L-glutaminyl-[histone H2A] + S-adenosyl-L-methionine = N(5)-methyl-L-glutaminyl-[histone H2A] + S-adenosyl-L-homocysteine + H(+). Functionally, S-adenosyl-L-methionine-dependent methyltransferase that has the ability to methylate both RNAs and proteins. Involved in pre-rRNA processing. Utilizes the methyl donor S-adenosyl-L-methionine to catalyze the site-specific 2'-hydroxyl methylation of ribose moieties in pre-ribosomal RNA. Site specificity is provided by a guide RNA that base pairs with the substrate. Methylation occurs at a characteristic distance from the sequence involved in base pairing with the guide RNA. Also acts as a protein methyltransferase by mediating methylation of 'Gln-105' of histone H2A (H2AQ105me), a modification that impairs binding of the FACT complex and is specifically present at 35S ribosomal DNA locus. This Eremothecium gossypii (strain ATCC 10895 / CBS 109.51 / FGSC 9923 / NRRL Y-1056) (Yeast) protein is rRNA 2'-O-methyltransferase fibrillarin (NOP1).